Consider the following 190-residue polypeptide: Dynactin subunit 6 (190 aa).

Position 186 is a phosphothreonine; by CDK1 (threonine 186).

The protein belongs to the dynactin subunits 5/6 family. Dynactin subunit 6 subfamily. In terms of assembly, subunit of dynactin, a multiprotein complex part of a tripartite complex with dynein and a adapter, such as BICDL1, BICD2 or HOOK3. The dynactin complex is built around ACTR1A/ACTB filament and consists of an actin-related filament composed of a shoulder domain, a pointed end and a barbed end. Its length is defined by its flexible shoulder domain. The soulder is composed of 2 DCTN1 subunits, 4 DCTN2 and 2 DCTN3. The 4 DCNT2 (via N-terminus) bind the ACTR1A filament and act as molecular rulers to determine the length. The pointed end is important for binding dynein-dynactin cargo adapters. Consists of 4 subunits: ACTR10, DCNT4, DCTN5 and DCTN6. Within the complex DCTN6 forms a heterodimer with DCTN5. The barbed end is composed of a CAPZA1:CAPZB heterodimers, which binds ACTR1A/ACTB filament and dynactin and stabilizes dynactin. Interacts with PLK1. Interacts with N4BP2L1. Phosphorylation at Thr-186 by CDK1 during mitotic prometaphase creates a binding site for PLK1 that facilitates its recruitment to kinetochores. In terms of tissue distribution, ubiquitous.

The protein localises to the cytoplasm. It localises to the cytoskeleton. The protein resides in the chromosome. It is found in the centromere. Its subcellular location is the kinetochore. Its function is as follows. Part of the dynactin complex that activates the molecular motor dynein for ultra-processive transport along microtubules. In Homo sapiens (Human), this protein is Dynactin subunit 6.